Consider the following 504-residue polypeptide: U3 snoRNP-associated protein-like YAO (504 aa).

The tract at residues 1-120 (MKYNNEKKKG…DDDDDEDDDE (120 aa)) is disordered. Residues 20 to 33 (GSNERDPFFEEEPK) show a composition bias toward basic and acidic residues. 2 stretches are compositionally biased toward acidic residues: residues 41–54 (DDDDIESVDSDAEE) and 70–81 (EVEDEDEFADET). Over residues 89-106 (LAEEMLNRRREAMRRERE) the composition is skewed to basic and acidic residues. Residues 107–120 (EADNDDDDDEDDDE) are compositionally biased toward acidic residues. WD repeat units lie at residues 159 to 198 (KHRRSVVSVALSDDDSRGFSASKDGTIMHWDVSSGKTDKY), 220 to 259 (NHSRESLALAVSSDGRYLATGGVDRHVHIWDVRTREHVQA), 262 to 301 (GHRNTVSCLCFRYGTSELYSGSFDRTVKVWNVEDKAFITE), 304 to 342 (GHQGEILAIDALRKERALTVGRDRTMLYHKVPESTRMIY), 344 to 382 (APASSLESCCFISDNEYLSGSDNGTVALWGMLKKKPVFV), 413 to 452 (SANSWVNAVATSRGSDLAASGAGNGFVRLWAVETNAIRPL), and 456 to 496 (PLTG…QNGV).

This sequence belongs to the WD repeat RRP9 family. In terms of tissue distribution, expressed in tissues with active in cell division such as shoot apexes, root tips, lateral root primordia, embryos, endosperm, pollen grains and embryo sacs.

The protein resides in the nucleus. It localises to the nucleolus. In terms of biological role, component of a nucleolar small nuclear ribonucleoprotein particle (snoRNP) thought to participate in the processing and modification of pre-ribosomal RNA. Essential for embryogenesis. Plays a critical role in embryo sac development and gametic cell fate. Required for the correct positioning of the first division plane of zygote. May function during early embryogenesis. The sequence is that of U3 snoRNP-associated protein-like YAO from Arabidopsis thaliana (Mouse-ear cress).